A 329-amino-acid polypeptide reads, in one-letter code: Quinone oxidoreductase (329 aa).

Position 2 is an N-acetylalanine (A2). K23 carries the N6-acetyllysine modification. NADP(+)-binding positions include Y53, 158–161 (SGGV), G181, H200, N229, 246–249 (VGCR), and 269–271 (VSL). K296 bears the N6-succinyllysine mark.

The protein belongs to the zinc-containing alcohol dehydrogenase family. Quinone oxidoreductase subfamily. Homotetramer.

The protein localises to the cytoplasm. It carries out the reaction 2 a quinone + NADPH + H(+) = 2 a 1,4-benzosemiquinone + NADP(+). Functionally, does not have alcohol dehydrogenase activity. Binds NADP and acts through a one-electron transfer process. Orthoquinones, such as 1,2-naphthoquinone or 9,10-phenanthrenequinone, are the best substrates (in vitro). May act in the detoxification of xenobiotics. Interacts with (AU)-rich elements (ARE) in the 3'-UTR of target mRNA species and enhances their stability. NADPH binding interferes with mRNA binding. The chain is Quinone oxidoreductase (Cryz) from Rattus norvegicus (Rat).